Here is a 29-residue protein sequence, read N- to C-terminus: Tail virion protein G7P (29 aa).

The helical transmembrane segment at 8 to 28 threads the bilayer; it reads VVIALGLVISFGLGAITAGVL.

This sequence belongs to the inovirus G7P protein family.

The protein resides in the virion. Its subcellular location is the host membrane. Functionally, may initiate with G9P the virion concomitant assembly-budding process, by interacting with the packaging signal of the viral genome. The assembly-budding takes place at the host inner membrane. In turn, G7P and G9P are present at the end of the filamentous virion that emerges first from the bacterial host. This is Tail virion protein G7P (VII) from Escherichia coli (Bacteriophage I2-2).